A 384-amino-acid polypeptide reads, in one-letter code: UDP-4-amino-4-deoxy-L-arabinose--oxoglutarate aminotransferase (384 aa).

N6-(pyridoxal phosphate)lysine is present on lysine 182.

The protein belongs to the DegT/DnrJ/EryC1 family. ArnB subfamily. In terms of assembly, homodimer. Requires pyridoxal 5'-phosphate as cofactor.

It catalyses the reaction UDP-4-amino-4-deoxy-beta-L-arabinose + 2-oxoglutarate = UDP-beta-L-threo-pentopyranos-4-ulose + L-glutamate. Its pathway is nucleotide-sugar biosynthesis; UDP-4-deoxy-4-formamido-beta-L-arabinose biosynthesis; UDP-4-deoxy-4-formamido-beta-L-arabinose from UDP-alpha-D-glucuronate: step 2/3. It participates in bacterial outer membrane biogenesis; lipopolysaccharide biosynthesis. Catalyzes the conversion of UDP-4-keto-arabinose (UDP-Ara4O) to UDP-4-amino-4-deoxy-L-arabinose (UDP-L-Ara4N). The modified arabinose is attached to lipid A and is required for resistance to polymyxin and cationic antimicrobial peptides. This chain is UDP-4-amino-4-deoxy-L-arabinose--oxoglutarate aminotransferase, found in Yersinia pseudotuberculosis serotype O:1b (strain IP 31758).